Here is a 324-residue protein sequence, read N- to C-terminus: Ribose-phosphate pyrophosphokinase (324 aa).

Residues 45–47 and 104–105 each bind ATP; these read NGE and RQ. 2 residues coordinate Mg(2+): histidine 138 and aspartate 178. Residue lysine 201 is part of the active site. Residues arginine 203, aspartate 229, and 233 to 237 contribute to the D-ribose 5-phosphate site; that span reads DTGGT.

This sequence belongs to the ribose-phosphate pyrophosphokinase family. Class I subfamily. As to quaternary structure, homohexamer. Mg(2+) serves as cofactor.

It is found in the cytoplasm. The catalysed reaction is D-ribose 5-phosphate + ATP = 5-phospho-alpha-D-ribose 1-diphosphate + AMP + H(+). Its pathway is metabolic intermediate biosynthesis; 5-phospho-alpha-D-ribose 1-diphosphate biosynthesis; 5-phospho-alpha-D-ribose 1-diphosphate from D-ribose 5-phosphate (route I): step 1/1. Involved in the biosynthesis of the central metabolite phospho-alpha-D-ribosyl-1-pyrophosphate (PRPP) via the transfer of pyrophosphoryl group from ATP to 1-hydroxyl of ribose-5-phosphate (Rib-5-P). The polypeptide is Ribose-phosphate pyrophosphokinase (Streptomyces coelicolor (strain ATCC BAA-471 / A3(2) / M145)).